The sequence spans 318 residues: Beta-ketoacyl-[acyl-carrier-protein] synthase III (318 aa).

Active-site residues include cysteine 113 and histidine 245. The ACP-binding stretch occupies residues 246–250; sequence QANIR. Asparagine 275 is an active-site residue.

The protein belongs to the thiolase-like superfamily. FabH family. Homodimer.

It localises to the cytoplasm. The catalysed reaction is malonyl-[ACP] + acetyl-CoA + H(+) = 3-oxobutanoyl-[ACP] + CO2 + CoA. It participates in lipid metabolism; fatty acid biosynthesis. Functionally, catalyzes the condensation reaction of fatty acid synthesis by the addition to an acyl acceptor of two carbons from malonyl-ACP. Catalyzes the first condensation reaction which initiates fatty acid synthesis and may therefore play a role in governing the total rate of fatty acid production. Possesses both acetoacetyl-ACP synthase and acetyl transacylase activities. Its substrate specificity determines the biosynthesis of branched-chain and/or straight-chain of fatty acids. In Wolbachia pipientis subsp. Culex pipiens (strain wPip), this protein is Beta-ketoacyl-[acyl-carrier-protein] synthase III.